A 368-amino-acid chain; its full sequence is Phosphoribosylformylglycinamidine cyclo-ligase (368 aa).

It belongs to the AIR synthase family.

It localises to the cytoplasm. It catalyses the reaction 2-formamido-N(1)-(5-O-phospho-beta-D-ribosyl)acetamidine + ATP = 5-amino-1-(5-phospho-beta-D-ribosyl)imidazole + ADP + phosphate + H(+). The protein operates within purine metabolism; IMP biosynthesis via de novo pathway; 5-amino-1-(5-phospho-D-ribosyl)imidazole from N(2)-formyl-N(1)-(5-phospho-D-ribosyl)glycinamide: step 2/2. In Chelativorans sp. (strain BNC1), this protein is Phosphoribosylformylglycinamidine cyclo-ligase.